The sequence spans 633 residues: DEAD-box ATP-dependent RNA helicase 27 (633 aa).

Over residues 1–17 the composition is skewed to basic and acidic residues; sequence MANLDMEQHSSENEEIK. The tract at residues 1–147 is disordered; it reads MANLDMEQHS…DKEEEKKLEE (147 aa). The stretch at 2–34 forms a coiled coil; that stretch reads ANLDMEQHSSENEEIKKKKHKKRARDEAKKLKQ. Composition is skewed to acidic residues over residues 37–47 and 74–83; these read MEEEPDHEDGD and DDGEDEAVAE. Residues 88-97 show a composition bias toward basic residues; the sequence is KKKKKNKKLQ. 2 stretches are compositionally biased toward acidic residues: residues 103 to 114 and 131 to 140; these read NDEEDEVIAEEE and SEEEEVEDKE. The stretch at 117-153 forms a coiled coil; sequence KKKKKKQRKDTEAKSEEEEVEDKEEEKKLEETSIMTN. Residues 154 to 182 carry the Q motif motif; the sequence is KTFESLSLSDNTYKSIKEMGFARMTQIQA. The 176-residue stretch at 185–360 folds into the Helicase ATP-binding domain; the sequence is IPPLMMGEDV…RVSLTSPVYI (176 aa). 198–205 serves as a coordination point for ATP; that stretch reads ARTGSGKT. The DEAD box motif lies at 308–311; that stretch reads DEAD. A Helicase C-terminal domain is found at 386 to 534; the sequence is RLLFLLTFLK…EHEFEEKKLL (149 aa). The segment at 608–633 is disordered; the sequence is KREPVNKFKRGRGGGRPGGKSKFERY.

The protein belongs to the DEAD box helicase family. DDX18/HAS1 subfamily.

The enzyme catalyses ATP + H2O = ADP + phosphate + H(+). This chain is DEAD-box ATP-dependent RNA helicase 27 (RH27), found in Arabidopsis thaliana (Mouse-ear cress).